The primary structure comprises 383 residues: Delta(12)-fatty-acid desaturase (383 aa).

The tract at residues 1-24 is disordered; that stretch reads MGAGGRMPVPTSSKKSETDTTKRV. Residues 14–24 are compositionally biased toward basic and acidic residues; it reads KKSETDTTKRV. A helical membrane pass occupies residues 56–76; sequence LISDIIIASCFYYVATNYFSL. Positions 105–109 match the Histidine box-1 motif; the sequence is HECGH. A helical membrane pass occupies residues 117 to 137; sequence WLDDTVGLIFHSFLLVPYFSW. The Histidine box-2 signature appears at 141 to 145; sequence HRRHH. 3 helical membrane-spanning segments follow: residues 179 to 199, 225 to 245, and 252 to 272; these read IMML…FNVS, IYLS…YAAA, and ICLY…ITYL. The Histidine box-3 signature appears at 315–319; the sequence is HVAHH.

It belongs to the fatty acid desaturase type 1 family. In terms of assembly, homo- and heterodimer. Interacts with FAD3 but not with FAD6. FAD2-FAD3 heterodimers can form a metabolic channel in which 18:1-PC is converted to 18:3-PC without releasing a free 18:2-PC intermediate. Expressed in shoots and roots. Expressed in leaves, stems, flowers and siliques.

The protein localises to the endoplasmic reticulum membrane. It localises to the microsome membrane. It carries out the reaction (9Z)-octadecenoyl-CoA + 2 Fe(II)-[cytochrome b5] + O2 + 2 H(+) = (9Z,12Z)-octadecadienoyl-CoA + 2 Fe(III)-[cytochrome b5] + 2 H2O. It catalyses the reaction (9Z)-hexadecenoyl-CoA + 2 Fe(II)-[cytochrome b5] + O2 + 2 H(+) = (9Z,12Z)-hexadecadienoyl-CoA + 2 Fe(III)-[cytochrome b5] + 2 H2O. The enzyme catalyses a (9Z)-octadecenoyl-containing glycerolipid + 2 Fe(II)-[cytochrome b5] + O2 + 2 H(+) = a (9Z,12Z)-octadecadienoyl-containing glycerolipid + 2 Fe(III)-[cytochrome b5] + 2 H2O. The catalysed reaction is (9Z)-octadecenoyl-CoA + AH2 + O2 = (9Z,12Z)-octadecadienoyl-CoA + A + 2 H2O. It carries out the reaction (9Z)-hexadecenoyl-CoA + AH2 + O2 = (9Z,12Z)-hexadecadienoyl-CoA + A + 2 H2O. It catalyses the reaction (9Z)-tetradecenoyl-CoA + 2 Fe(II)-[cytochrome b5] + O2 + 2 H(+) = (9Z,12Z)-tetradecadienoyl-CoA + 2 Fe(III)-[cytochrome b5] + 2 H2O. The enzyme catalyses (9Z)-pentadecenoyl-CoA + 2 Fe(II)-[cytochrome b5] + O2 + 2 H(+) = (9Z,12Z)-pentadecadienoyl-CoA + 2 Fe(III)-[cytochrome b5] + 2 H2O. The catalysed reaction is (9Z)-heptadecenoyl-CoA + 2 Fe(II)-[cytochrome b5] + O2 + 2 H(+) = (9Z,12Z)-heptadecadienoyl-CoA + 2 Fe(III)-[cytochrome b5] + 2 H2O. It participates in lipid metabolism; polyunsaturated fatty acid biosynthesis. Its function is as follows. ER (microsomal) omega-6 fatty acid desaturase introduces the second double bond in the biosynthesis of 18:3 fatty acids, important constituents of plant membranes. Delta(12)-desaturase with regioselectivity determined by the double bond (delta(9) position) and carboxyl group of the substrate. Can use both 16:1 and 18:1 fatty acids as substrates. It is thought to use cytochrome b5 as an electron donor and to act on fatty acids esterified to phosphatidylcholine (PC) and, possibly, other phospholipids. Very low constitutive hydroxylation activity. Required for desaturation of fatty acids present in extraplastidial membranes, including mitochondria. Required for salt tolerance during seed germination and early seedling growth. In Arabidopsis thaliana (Mouse-ear cress), this protein is Delta(12)-fatty-acid desaturase.